The chain runs to 631 residues: Dolichyl-diphosphooligosaccharide--protein glycosyltransferase subunit 2 (631 aa).

The first 22 residues, 1–22 (MASPGASTVFLLALTILAGTQA), serve as a signal peptide directing secretion. The Lumenal segment spans residues 23 to 540 (LTPTHYLTKP…REPEKRPPTV (518 aa)). Asn106 carries N-linked (GlcNAc...) asparagine glycosylation. Residue Lys154 forms a Glycyl lysine isopeptide (Lys-Gly) (interchain with G-Cter in ubiquitin) linkage. Residues 541-561 (VSNTFTALILSPLLLLFALWI) form a helical membrane-spanning segment. The Cytoplasmic segment spans residues 562 to 571 (RIGANVSNFT). The helical transmembrane segment at 572-592 (FAPSTIIFHLGHAAMLGLMYV) threads the bilayer. The Lumenal segment spans residues 593-596 (YWTQ). The helical transmembrane segment at 597 to 617 (LNMFQTLKYLAILGSVTFLAG) threads the bilayer. Residues 618–631 (NRMLAQQAIKRTAH) lie on the Cytoplasmic side of the membrane.

Belongs to the SWP1 family. As to quaternary structure, component of the oligosaccharyltransferase (OST) complex. OST exists in two different complex forms which contain common core subunits RPN1, RPN2, OST48, OST4, DAD1 and TMEM258, either STT3A or STT3B as catalytic subunits, and form-specific accessory subunits. STT3A complex assembly occurs through the formation of 3 subcomplexes. Subcomplex 1 contains RPN1 and TMEM258, subcomplex 2 contains the STT3A-specific subunits STT3A, DC2/OSTC, and KCP2 as well as the core subunit OST4, and subcomplex 3 contains RPN2, DAD1, and OST48. The STT3A complex can form stable complexes with the Sec61 complex or with both the Sec61 and TRAP complexes. Interacts with DDI2. Interacts with TMEM35A/NACHO.

The protein localises to the endoplasmic reticulum. It localises to the endoplasmic reticulum membrane. The protein operates within protein modification; protein glycosylation. In terms of biological role, subunit of the oligosaccharyl transferase (OST) complex that catalyzes the initial transfer of a defined glycan (Glc(3)Man(9)GlcNAc(2) in eukaryotes) from the lipid carrier dolichol-pyrophosphate to an asparagine residue within an Asn-X-Ser/Thr consensus motif in nascent polypeptide chains, the first step in protein N-glycosylation. N-glycosylation occurs cotranslationally and the complex associates with the Sec61 complex at the channel-forming translocon complex that mediates protein translocation across the endoplasmic reticulum (ER). All subunits are required for a maximal enzyme activity. This chain is Dolichyl-diphosphooligosaccharide--protein glycosyltransferase subunit 2, found in Canis lupus familiaris (Dog).